We begin with the raw amino-acid sequence, 427 residues long: 3-phosphoshikimate 1-carboxyvinyltransferase (427 aa).

The 3-phosphoshikimate site is built by K22, S23, and R27. K22 provides a ligand contact to phosphoenolpyruvate. Positions 93 and 122 each coordinate phosphoenolpyruvate. The 3-phosphoshikimate site is built by S167, Q169, D315, and K342. Q169 provides a ligand contact to phosphoenolpyruvate. D315 acts as the Proton acceptor in catalysis. Phosphoenolpyruvate is bound by residues R346 and R387.

The protein belongs to the EPSP synthase family. Monomer.

Its subcellular location is the cytoplasm. It catalyses the reaction 3-phosphoshikimate + phosphoenolpyruvate = 5-O-(1-carboxyvinyl)-3-phosphoshikimate + phosphate. It functions in the pathway metabolic intermediate biosynthesis; chorismate biosynthesis; chorismate from D-erythrose 4-phosphate and phosphoenolpyruvate: step 6/7. In terms of biological role, catalyzes the transfer of the enolpyruvyl moiety of phosphoenolpyruvate (PEP) to the 5-hydroxyl of shikimate-3-phosphate (S3P) to produce enolpyruvyl shikimate-3-phosphate and inorganic phosphate. In Thermus thermophilus (strain ATCC BAA-163 / DSM 7039 / HB27), this protein is 3-phosphoshikimate 1-carboxyvinyltransferase.